A 327-amino-acid chain; its full sequence is Biotin synthase (327 aa).

The 231-residue stretch at 48–278 (YCGDGVGLCM…DRHITVCGGR (231 aa)) folds into the Radical SAM core domain. Residues C66, C70, and C73 each coordinate [4Fe-4S] cluster. S143 and C203 together coordinate [2Fe-2S] cluster.

It belongs to the radical SAM superfamily. Biotin synthase family. As to quaternary structure, homodimer. The cofactor is [4Fe-4S] cluster. Requires [2Fe-2S] cluster as cofactor.

The catalysed reaction is (4R,5S)-dethiobiotin + (sulfur carrier)-SH + 2 reduced [2Fe-2S]-[ferredoxin] + 2 S-adenosyl-L-methionine = (sulfur carrier)-H + biotin + 2 5'-deoxyadenosine + 2 L-methionine + 2 oxidized [2Fe-2S]-[ferredoxin]. It participates in cofactor biosynthesis; biotin biosynthesis; biotin from 7,8-diaminononanoate: step 2/2. Its function is as follows. Catalyzes the conversion of dethiobiotin (DTB) to biotin by the insertion of a sulfur atom into dethiobiotin via a radical-based mechanism. This Syntrophotalea carbinolica (strain DSM 2380 / NBRC 103641 / GraBd1) (Pelobacter carbinolicus) protein is Biotin synthase.